The primary structure comprises 411 residues: 2,3-bisphosphoglycerate-independent phosphoglycerate mutase (411 aa).

The protein belongs to the BPG-independent phosphoglycerate mutase family. A-PGAM subfamily.

It catalyses the reaction (2R)-2-phosphoglycerate = (2R)-3-phosphoglycerate. Its pathway is carbohydrate degradation; glycolysis; pyruvate from D-glyceraldehyde 3-phosphate: step 3/5. Catalyzes the interconversion of 2-phosphoglycerate and 3-phosphoglycerate. This is 2,3-bisphosphoglycerate-independent phosphoglycerate mutase from Thermococcus gammatolerans (strain DSM 15229 / JCM 11827 / EJ3).